Here is a 576-residue protein sequence, read N- to C-terminus: RNA-binding post-transcriptional regulator cip2 (576 aa).

The RRM domain occupies 232–310 (TAIVIKNIPF…RRLRVEWKRQ (79 aa)). The R3H domain maps to 355 to 420 (DPAILNVYSH…AKQVVITMPS (66 aa)).

Interacts with csx1. In terms of processing, phosphorylated by sty1.

The protein resides in the cytoplasm. Its function is as follows. Regulates global gene expression after oxidative stress. Interacts and stabilizes mRNAs and may regulate their transition between different cytoplasmic components after oxidative stress. This chain is RNA-binding post-transcriptional regulator cip2 (cip2), found in Schizosaccharomyces pombe (strain 972 / ATCC 24843) (Fission yeast).